The following is a 126-amino-acid chain: Fatty acid-binding protein 1, liver (126 aa).

The protein belongs to the calycin superfamily. Fatty-acid binding protein (FABP) family.

It localises to the cytoplasm. In terms of biological role, binds free fatty acids and their coenzyme A derivatives, bilirubin, and some other small molecules in the cytoplasm. May be involved in intracellular lipid transport. The specificity of axolotl L-FABP differs from that of LB-FABP. This chain is Fatty acid-binding protein 1, liver, found in Ambystoma mexicanum (Axolotl).